We begin with the raw amino-acid sequence, 391 residues long: Oxytocin receptor (391 aa).

Residues 1–38 (MEGAFAANWSAEAVNGSAAPPGTEGNRTAGPPQRNEAL) are Extracellular-facing. Residues N8, N15, and N26 are each glycosylated (N-linked (GlcNAc...) asparagine). The chain crosses the membrane as a helical span at residues 39–63 (ARVEVAVLCLILFLALSGNACVLLA). The Cytoplasmic segment spans residues 64–74 (LRTTRHKHSRL). A helical membrane pass occupies residues 75 to 97 (FFFMKHLSIADLVVAVFQVLPQL). At 98 to 113 (LWDITFRFYGPDLLCR) the chain is on the extracellular side. A disulfide bond links C112 and C187. Residues 114–135 (LVKYLQVVGMFASTYLLLLMSL) traverse the membrane as a helical segment. Over 136 to 154 (DRCLAICQPLRSLSRRTDR) the chain is Cytoplasmic. A helical transmembrane segment spans residues 155-175 (LAVLVTWLGCLVASAPQVHIF). Over 176 to 202 (SLREVADGVFDCWAVFIQPWGPKAYIT) the chain is Extracellular. A helical transmembrane segment spans residues 203–225 (WITLAVYIVPVIVLATCYGLISF). Topologically, residues 226–277 (KIWQNLRLKTAAAAAEAAAGAEGEAADWAGRAILARVSNVKLISKAKIRTVK) are cytoplasmic. Residues 278–296 (MTFIVVLAFIVCWTPFFFV) traverse the membrane as a helical segment. The Extracellular segment spans residues 297 to 311 (QMWSVWDADAPKEAS). The helical transmembrane segment at 312–334 (PFIIAMLLASLNSCCNPWIYMLF) threads the bilayer. The Cytoplasmic segment spans residues 335–391 (TGHLFQELVQRFLCCSFRRLKGSRPGETSVSKKSNSSTFVLSQYSSSQRRCSQPSTL). A phosphoserine mark is found at S368 and S370.

Belongs to the G-protein coupled receptor 1 family. Vasopressin/oxytocin receptor subfamily.

It localises to the cell membrane. In terms of biological role, receptor for oxytocin. The activity of this receptor is mediated by G proteins which activate a phosphatidylinositol-calcium second messenger system. The protein is Oxytocin receptor (OXTR) of Bos taurus (Bovine).